The following is a 668-amino-acid chain: Probable metal-nicotianamine transporter YSL5 (668 aa).

Residues 1 to 11 (MPPPETSSAAA) show a composition bias toward low complexity. The tract at residues 1–22 (MPPPETSSAAAPSPPSPDPLPP) is disordered. Pro residues predominate over residues 12–22 (PSPPSPDPLPP). The next 14 helical transmembrane spans lie at 27-47 (LTLR…VVIH), 51-71 (LTVG…FFLA), 102-122 (CAIA…IFAM), 147-167 (LGWM…SIVM), 209-229 (LVKY…FSGV), 268-288 (IVNC…WPFI), 315-335 (IAIS…FLII), 383-403 (LAVS…PIIF), 410-430 (LVLV…YGMG), 443-463 (IALF…AGLA), 501-521 (IGVA…WTAF), 557-577 (LEIC…KDVV), 595-615 (FYIG…LFAW), and 633-653 (GLIC…ILGV).

This sequence belongs to the YSL (TC 2.A.67.2) family. As to expression, expressed in roots.

The protein localises to the membrane. May be involved in the transport of nicotianamine-chelated metals. In Oryza sativa subsp. japonica (Rice), this protein is Probable metal-nicotianamine transporter YSL5 (YSL5).